Consider the following 890-residue polypeptide: Alanine--tRNA ligase (890 aa).

Zn(2+)-binding residues include histidine 565, histidine 569, cysteine 677, and histidine 681.

It belongs to the class-II aminoacyl-tRNA synthetase family. Zn(2+) is required as a cofactor.

The protein localises to the cytoplasm. It catalyses the reaction tRNA(Ala) + L-alanine + ATP = L-alanyl-tRNA(Ala) + AMP + diphosphate. In terms of biological role, catalyzes the attachment of alanine to tRNA(Ala) in a two-step reaction: alanine is first activated by ATP to form Ala-AMP and then transferred to the acceptor end of tRNA(Ala). Also edits incorrectly charged Ser-tRNA(Ala) and Gly-tRNA(Ala) via its editing domain. The protein is Alanine--tRNA ligase of Zymomonas mobilis subsp. mobilis (strain ATCC 31821 / ZM4 / CP4).